Consider the following 859-residue polypeptide: Leucine--tRNA ligase (859 aa).

A 'HIGH' region motif is present at residues 42–52 (PYPSGRLHMGH). A 'KMSKS' region motif is present at residues 618–622 (KMSKS). ATP is bound at residue Lys621.

The protein belongs to the class-I aminoacyl-tRNA synthetase family.

It is found in the cytoplasm. It carries out the reaction tRNA(Leu) + L-leucine + ATP = L-leucyl-tRNA(Leu) + AMP + diphosphate. The sequence is that of Leucine--tRNA ligase from Shewanella baltica (strain OS195).